Consider the following 517-residue polypeptide: MWIEIPECYEVLRNVFSKFRRHSLTAAMVKLLMRADTHVSFTVPAEEPVAKCTFSQVLAALSVSLGSMVVGFSSAYTSPALVSMKDRNITSFEVTDQSGSWVGGIMPLAGLVGGILGGPLIEYLGRKNTILATATPFIISWLLIACATHVAMVLVGRALSGFSVGVASLSLPVYLGETVQPEVRGTLGLLPTAFGNIGILLCFVAGNYMDWSELAFLGATLPVPFLILMFLIPETPRWYVSRGRDDRARKALQWLRGKKADVDPELKGIIKSHQDAERHASQSAMLDLLKKTNLKPLLISLGLMFFQQLSGINAVIFYTVQIFQDAGSTIDENLCTIIVGVVNFIATFIATLLIDRLGRKMLLYISDIAMIITLMTLGGFFYVKNNGGDVSHIGWLPLASFVIFVLGFSLGFGPIPWLMMGEILPGKIRGSAASVATAFNWSCTFVVTKTFADIIASIGTHGAFWMFGSVCVVGLVFVIMYVPETQGKSLEDIERKMCGRVRRMSSVANIKPLSFNM.

The Cytoplasmic segment spans residues 1–56; the sequence is MWIEIPECYEVLRNVFSKFRRHSLTAAMVKLLMRADTHVSFTVPAEEPVAKCTFSQ. Residues 57–77 form a helical membrane-spanning segment; that stretch reads VLAALSVSLGSMVVGFSSAYT. At 78–100 the chain is on the extracellular side; it reads SPALVSMKDRNITSFEVTDQSGS. N88 carries N-linked (GlcNAc...) asparagine glycosylation. Residues 101 to 121 form a helical membrane-spanning segment; the sequence is WVGGIMPLAGLVGGILGGPLI. At 122–135 the chain is on the cytoplasmic side; sequence EYLGRKNTILATAT. The chain crosses the membrane as a helical span at residues 136-156; the sequence is PFIISWLLIACATHVAMVLVG. The Extracellular segment spans residues 157 to 158; it reads RA. The helical transmembrane segment at 159-179 threads the bilayer; it reads LSGFSVGVASLSLPVYLGETV. The Cytoplasmic segment spans residues 180–184; it reads QPEVR. A helical transmembrane segment spans residues 185–205; it reads GTLGLLPTAFGNIGILLCFVA. Over 206–212 the chain is Extracellular; sequence GNYMDWS. The chain crosses the membrane as a helical span at residues 213–233; it reads ELAFLGATLPVPFLILMFLIP. Over 234-296 the chain is Cytoplasmic; the sequence is ETPRWYVSRG…DLLKKTNLKP (63 aa). Residues 297-317 traverse the membrane as a helical segment; it reads LLISLGLMFFQQLSGINAVIF. Topologically, residues 318–333 are extracellular; the sequence is YTVQIFQDAGSTIDEN. The helical transmembrane segment at 334–354 threads the bilayer; that stretch reads LCTIIVGVVNFIATFIATLLI. At 355–360 the chain is on the cytoplasmic side; the sequence is DRLGRK. Residues 361-381 form a helical membrane-spanning segment; sequence MLLYISDIAMIITLMTLGGFF. The Extracellular portion of the chain corresponds to 382–392; sequence YVKNNGGDVSH. A helical membrane pass occupies residues 393–413; the sequence is IGWLPLASFVIFVLGFSLGFG. The Cytoplasmic segment spans residues 414-437; sequence PIPWLMMGEILPGKIRGSAASVAT. A helical membrane pass occupies residues 438–458; it reads AFNWSCTFVVTKTFADIIASI. Topologically, residues 459-461 are extracellular; it reads GTH. The helical transmembrane segment at 462–482 threads the bilayer; the sequence is GAFWMFGSVCVVGLVFVIMYV. Residues 483–517 lie on the Cytoplasmic side of the membrane; sequence PETQGKSLEDIERKMCGRVRRMSSVANIKPLSFNM.

This sequence belongs to the major facilitator superfamily. Sugar transporter (TC 2.A.1.1) family. Trehalose transporter subfamily.

Its subcellular location is the cell membrane. High-capacity facilitative transporter for trehalose. Does not transport maltose, sucrose or lactose. Mediates the bidirectional transfer of trehalose. Responsible for the transport of trehalose synthesized in the fat body and the incorporation of trehalose into other tissues that require a carbon source, thereby regulating trehalose levels in the hemolymph. This is Facilitated trehalose transporter Tret1 from Culex quinquefasciatus (Southern house mosquito).